The chain runs to 334 residues: Ferredoxin--NADP reductase (334 aa).

Residues Asp33, Gln41, Tyr46, Ala86, Phe120, Asp286, and Thr327 each contribute to the FAD site.

This sequence belongs to the ferredoxin--NADP reductase type 2 family. As to quaternary structure, homodimer. FAD is required as a cofactor.

It catalyses the reaction 2 reduced [2Fe-2S]-[ferredoxin] + NADP(+) + H(+) = 2 oxidized [2Fe-2S]-[ferredoxin] + NADPH. The chain is Ferredoxin--NADP reductase from Rickettsia typhi (strain ATCC VR-144 / Wilmington).